A 691-amino-acid polypeptide reads, in one-letter code: Penicillin-binding protein 2D (691 aa).

Over 1–19 (MDAMTNKRLRLTLKTVRAF) the chain is Cytoplasmic. The chain crosses the membrane as a helical; Signal-anchor for type II membrane protein span at residues 20–40 (IFLGAFAALAAAAVFMTVILI). The Extracellular segment spans residues 41 to 691 (AKYQGAPSVQ…WWDKWLGRHH (651 aa)). Positions 55–223 (TILYASDGSK…PSGYSPYVNE (169 aa)) are transglycosylase. E94 (proton donor; for transglycosylase activity) is an active-site residue. A transpeptidase region spans residues 327–605 (VGFSAIDPRT…AKTIWADFME (279 aa)). S365 (acyl-ester intermediate; for transpeptidase activity) is an active-site residue. Residues 663–691 (AKQTKDRLPSKEKPASEKKWWDKWLGRHH) form a disordered region. A compositionally biased stretch (basic and acidic residues) spans 664–691 (KQTKDRLPSKEKPASEKKWWDKWLGRHH).

This sequence in the N-terminal section; belongs to the glycosyltransferase 51 family. It in the C-terminal section; belongs to the transpeptidase family.

It localises to the cell membrane. The catalysed reaction is [GlcNAc-(1-&gt;4)-Mur2Ac(oyl-L-Ala-gamma-D-Glu-L-Lys-D-Ala-D-Ala)](n)-di-trans,octa-cis-undecaprenyl diphosphate + beta-D-GlcNAc-(1-&gt;4)-Mur2Ac(oyl-L-Ala-gamma-D-Glu-L-Lys-D-Ala-D-Ala)-di-trans,octa-cis-undecaprenyl diphosphate = [GlcNAc-(1-&gt;4)-Mur2Ac(oyl-L-Ala-gamma-D-Glu-L-Lys-D-Ala-D-Ala)](n+1)-di-trans,octa-cis-undecaprenyl diphosphate + di-trans,octa-cis-undecaprenyl diphosphate + H(+). The enzyme catalyses Preferential cleavage: (Ac)2-L-Lys-D-Ala-|-D-Ala. Also transpeptidation of peptidyl-alanyl moieties that are N-acyl substituents of D-alanine.. It functions in the pathway cell wall biogenesis; peptidoglycan biosynthesis. Its function is as follows. Involved in the polymerization and cross-linking of spore peptidoglycan. May be required for synthesis of the spore germ cell wall, the first layer of peptidoglycan synthesized on the surface of the inner forespore membrane. The chain is Penicillin-binding protein 2D (pbpG) from Bacillus subtilis (strain 168).